A 95-amino-acid polypeptide reads, in one-letter code: Small ribosomal subunit protein bS6 (95 aa).

Belongs to the bacterial ribosomal protein bS6 family.

Functionally, binds together with bS18 to 16S ribosomal RNA. The sequence is that of Small ribosomal subunit protein bS6 from Oceanobacillus iheyensis (strain DSM 14371 / CIP 107618 / JCM 11309 / KCTC 3954 / HTE831).